Here is a 183-residue protein sequence, read N- to C-terminus: Translation initiation factor IF-3 (183 aa).

The span at 1 to 13 (MKQPDRNQQQGAK) shows a compositional bias: polar residues. Residues 1-21 (MKQPDRNQQQGAKSNRPAIND) are disordered.

The protein belongs to the IF-3 family. As to quaternary structure, monomer.

It localises to the cytoplasm. Functionally, IF-3 binds to the 30S ribosomal subunit and shifts the equilibrium between 70S ribosomes and their 50S and 30S subunits in favor of the free subunits, thus enhancing the availability of 30S subunits on which protein synthesis initiation begins. The polypeptide is Translation initiation factor IF-3 (Acinetobacter baumannii (strain AYE)).